A 400-amino-acid polypeptide reads, in one-letter code: tRNA pseudouridine synthase Pus10 (400 aa).

Residues Gln-77–Arg-194 form the THUMP domain. Tyr-301 is a substrate binding site.

This sequence belongs to the pseudouridine synthase Pus10 family.

It carries out the reaction uridine(54) in tRNA = pseudouridine(54) in tRNA. It catalyses the reaction uridine(55) in tRNA = pseudouridine(55) in tRNA. Its function is as follows. Responsible for synthesis of pseudouridine from uracil-54 and uracil-55 in the psi GC loop of transfer RNAs. The polypeptide is tRNA pseudouridine synthase Pus10 (Acidilobus saccharovorans (strain DSM 16705 / JCM 18335 / VKM B-2471 / 345-15)).